A 1430-amino-acid chain; its full sequence is DNA-directed RNA polymerase subunit beta' (1430 aa).

Zn(2+)-binding residues include cysteine 71, cysteine 73, cysteine 86, and cysteine 89. Residues aspartate 461, aspartate 463, and aspartate 465 each coordinate Mg(2+). Residues cysteine 815, cysteine 889, cysteine 896, and cysteine 899 each coordinate Zn(2+). The interval 1388–1430 is disordered; the sequence is RRQEAPAPAATPEQQAEEVFASLGQGEGEGPSPSDEASGPEVE. Over residues 1392-1405 the composition is skewed to low complexity; the sequence is APAPAATPEQQAEE.

The protein belongs to the RNA polymerase beta' chain family. The RNAP catalytic core consists of 2 alpha, 1 beta, 1 beta' and 1 omega subunit. When a sigma factor is associated with the core the holoenzyme is formed, which can initiate transcription. Mg(2+) serves as cofactor. The cofactor is Zn(2+).

It catalyses the reaction RNA(n) + a ribonucleoside 5'-triphosphate = RNA(n+1) + diphosphate. In terms of biological role, DNA-dependent RNA polymerase catalyzes the transcription of DNA into RNA using the four ribonucleoside triphosphates as substrates. This Halorhodospira halophila (strain DSM 244 / SL1) (Ectothiorhodospira halophila (strain DSM 244 / SL1)) protein is DNA-directed RNA polymerase subunit beta'.